Reading from the N-terminus, the 412-residue chain is Shaggy-related protein kinase zeta (412 aa).

The span at 1–19 (MTSIPLGPPQPPSLAPQPP) shows a compositional bias: pro residues. The tract at residues 1–33 (MTSIPLGPPQPPSLAPQPPHLHGGDSLKRRPDI) is disordered. The segment covering 22 to 33 (HGGDSLKRRPDI) has biased composition (basic and acidic residues). Phosphoserine is present on Ser-26. Positions 72 to 356 (YMAERVVGTG…ALEACAHPFF (285 aa)) constitute a Protein kinase domain. ATP contacts are provided by residues 78–86 (VGTGSFGIV) and Lys-101. The residue at position 127 (Ser-127) is a Phosphoserine. 2 positions are modified to phosphothreonine: Thr-136 and Thr-137. Asp-197 functions as the Proton acceptor in the catalytic mechanism. The residue at position 219 (Ser-219) is a Phosphoserine. Phosphotyrosine is present on Tyr-232. The residue at position 252 (Ser-252) is a Phosphoserine. Thr-293 is modified (phosphothreonine). Position 342 is a phosphoserine (Ser-342). Thr-346 carries the post-translational modification Phosphothreonine.

This sequence belongs to the protein kinase superfamily. CMGC Ser/Thr protein kinase family. GSK-3 subfamily. As to quaternary structure, binds to KIB1. Interacts with beet curly top virus AL4/C4 and tomato golden mosaic virus AL4/AC4. In terms of processing, autophosphorylated mainly on threonine and serine residues.

It carries out the reaction L-seryl-[protein] + ATP = O-phospho-L-seryl-[protein] + ADP + H(+). The enzyme catalyses L-threonyl-[protein] + ATP = O-phospho-L-threonyl-[protein] + ADP + H(+). May mediate extracellular signals to regulate transcription in differentiating cells. The chain is Shaggy-related protein kinase zeta (ASK6) from Arabidopsis thaliana (Mouse-ear cress).